The primary structure comprises 98 residues: Cell division topological specificity factor (98 aa).

Belongs to the MinE family.

Functionally, prevents the cell division inhibition by proteins MinC and MinD at internal division sites while permitting inhibition at polar sites. This ensures cell division at the proper site by restricting the formation of a division septum at the midpoint of the long axis of the cell. This chain is Cell division topological specificity factor, found in Methylorubrum populi (strain ATCC BAA-705 / NCIMB 13946 / BJ001) (Methylobacterium populi).